We begin with the raw amino-acid sequence, 349 residues long: uncharacterized protein (349 aa).

Residue Ser-2 is modified to Phosphoserine.

This is an uncharacterized protein from Saccharomyces cerevisiae (strain ATCC 204508 / S288c) (Baker's yeast).